The following is a 381-amino-acid chain: Protein-glutamate methylesterase/protein-glutamine glutaminase 1 (381 aa).

Residues arginine 14 to serine 132 form the Response regulatory domain. Aspartate 65 bears the 4-aspartylphosphate mark. Residues glutamine 143–valine 173 are disordered. The span at alanine 144–arginine 153 shows a compositional bias: low complexity. The CheB-type methylesterase domain maps to proline 188–arginine 381. Catalysis depends on residues serine 199, histidine 227, and aspartate 323.

This sequence belongs to the CheB family. Post-translationally, phosphorylated by CheA. Phosphorylation of the N-terminal regulatory domain activates the methylesterase activity.

It is found in the cytoplasm. The enzyme catalyses [protein]-L-glutamate 5-O-methyl ester + H2O = L-glutamyl-[protein] + methanol + H(+). It carries out the reaction L-glutaminyl-[protein] + H2O = L-glutamyl-[protein] + NH4(+). Functionally, involved in chemotaxis. Part of a chemotaxis signal transduction system that modulates chemotaxis in response to various stimuli. Catalyzes the demethylation of specific methylglutamate residues introduced into the chemoreceptors (methyl-accepting chemotaxis proteins or MCP) by CheR. Also mediates the irreversible deamidation of specific glutamine residues to glutamic acid. This chain is Protein-glutamate methylesterase/protein-glutamine glutaminase 1, found in Paramagnetospirillum magneticum (strain ATCC 700264 / AMB-1) (Magnetospirillum magneticum).